Here is a 287-residue protein sequence, read N- to C-terminus: Pol-RFamide neuropeptides (287 aa).

The first 21 residues, 1–21 (MNLITLLVLGVSTCLIYGIEA), serve as a signal peptide directing secretion. The propeptide occupies 22 to 52 (DEKTSSALENEIVEILNGNFKNEKKSIETSD). Q53 is modified (pyrrolidone carboxylic acid). A Phenylalanine amide modification is found at F59. The propeptide occupies 62–64 (EVN). Q65 carries the post-translational modification Pyrrolidone carboxylic acid. Residue F71 is modified to Phenylalanine amide. The propeptide occupies 74–77 (ELSD). A Pyrrolidone carboxylic acid modification is found at Q78. F84 carries the post-translational modification Phenylalanine amide. Positions 87–90 (ELSD) are excised as a propeptide. Residue Q91 is modified to Pyrrolidone carboxylic acid. F97 is modified (phenylalanine amide). The propeptide occupies 100–103 (EVLD). Q104 bears the Pyrrolidone carboxylic acid mark. Position 110 is a phenylalanine amide (F110). Residues 113-116 (DASN) constitute a propeptide that is removed on maturation. Q117 is modified (pyrrolidone carboxylic acid). F123 carries the phenylalanine amide modification. The propeptide occupies 126–129 (ELSD). Position 130 is a pyrrolidone carboxylic acid (Q130). At F136 the chain carries Phenylalanine amide. Positions 139-142 (EGSN) are excised as a propeptide. Q143 bears the Pyrrolidone carboxylic acid mark. Residue F149 is modified to Phenylalanine amide. The propeptide occupies 152–168 (EASKNDLEKQNGRGDSD). Q169 is subject to Pyrrolidone carboxylic acid. F175 is modified (phenylalanine amide). The propeptide occupies 178–181 (EARK). The residue at position 182 (Q182) is a Pyrrolidone carboxylic acid. Phenylalanine amide is present on F188. A propeptide spanning residues 192–194 (DMN) is cleaved from the precursor. Q195 carries the post-translational modification Pyrrolidone carboxylic acid. H201 carries the post-translational modification Histidine amide. Residues 204-207 (ETSD) constitute a propeptide that is removed on maturation. Q208 is subject to Pyrrolidone carboxylic acid. Position 214 is a phenylalanine amide (F214). A propeptide spanning residues 217 to 220 (QLSD) is cleaved from the precursor. Q221 carries the pyrrolidone carboxylic acid modification. A Phenylalanine amide modification is found at F227. The disordered stretch occupies residues 229 to 267 (REVKNDKNNPFRSRYTGDSTQLQRENNQPIEELRDNTEK). A propeptide spanning residues 230–287 (EVKNDKNNPFRSRYTGDSTQLQRENNQPIEELRDNTEKVSIENKPIMKKTSVKISKTV) is cleaved from the precursor. Over residues 238 to 257 (PFRSRYTGDSTQLQRENNQP) the composition is skewed to polar residues.

It belongs to the FARP (FMRFamide related peptide) family. In terms of processing, the N-terminal processing sites of the Pol-RFamide peptides are acidic suggesting that cniderian nervous systems may use a variety of unconventional processing procedures.

It localises to the secreted. Functionally, has direct action on motoneurons, and effect includes transient inhibition followed by prolonged excitation. In Polyorchis penicillatus (Hydromedusa), this protein is Pol-RFamide neuropeptides.